A 640-amino-acid chain; its full sequence is Threonine--tRNA ligase (640 aa).

The TGS domain maps to 1–61 (MPTITLPDGS…DSDATLQIIT (61 aa)). The segment at 242–533 (DHRKIGKRLG…LIEHYEGAFP (292 aa)) is catalytic. Residues Cys-333, His-384, and His-510 each contribute to the Zn(2+) site.

Belongs to the class-II aminoacyl-tRNA synthetase family. In terms of assembly, homodimer. Requires Zn(2+) as cofactor.

It localises to the cytoplasm. The enzyme catalyses tRNA(Thr) + L-threonine + ATP = L-threonyl-tRNA(Thr) + AMP + diphosphate + H(+). In terms of biological role, catalyzes the attachment of threonine to tRNA(Thr) in a two-step reaction: L-threonine is first activated by ATP to form Thr-AMP and then transferred to the acceptor end of tRNA(Thr). Also edits incorrectly charged L-seryl-tRNA(Thr). This chain is Threonine--tRNA ligase, found in Pseudomonas fluorescens (strain Pf0-1).